A 270-amino-acid polypeptide reads, in one-letter code: Glucosamine-6-phosphate deaminase (270 aa).

Residue Asp-68 is the Proton acceptor; for enolization step of the active site. The active-site For ring-opening step is Asp-145. Residue His-147 is the Proton acceptor; for ring-opening step of the active site. The For ring-opening step role is filled by Glu-152.

It belongs to the glucosamine/galactosamine-6-phosphate isomerase family. NagB subfamily.

The enzyme catalyses alpha-D-glucosamine 6-phosphate + H2O = beta-D-fructose 6-phosphate + NH4(+). Its pathway is amino-sugar metabolism; N-acetylneuraminate degradation; D-fructose 6-phosphate from N-acetylneuraminate: step 5/5. Functionally, catalyzes the reversible isomerization-deamination of glucosamine 6-phosphate (GlcN6P) to form fructose 6-phosphate (Fru6P) and ammonium ion. This is Glucosamine-6-phosphate deaminase from Bifidobacterium longum (strain DJO10A).